A 1430-amino-acid polypeptide reads, in one-letter code: MKDWENIFSQSHIIPPHKQRCKHAPSEKAGYQICIETLEGTPFRQGVLERSVEVSCQLRMTLFDSTYHHFFGRTWKSSTKPIKAIPGKASKILFNEPIYFYTTLIDPSIMAVIEVVALSKKQGGSKQELSCGFGIMSLFSHQLEDDSSIQSGRLKLYYGTPRSLLHPTLKDPNELNQHMTLIENTCIQYSVRPHKVLPTVAHLFPENVLVSGSETIPGIMPSCDNSGDALKKPHVQKTVICYLDQICLFLYPTLEKFEEELTMLVNSDWLPKDDGNINGGSVSIQERRLHIGVHNGWVFVQKPQIVVVVPEAEMMRGHSTTSLKKKNIAQQKLSSTVQALVLRSRIRLPEMVNHHGFALVFLLEYVFSIPNGIHSKTPSAASSTSYMHMIRWASWTPSMEQGSADVALPLQGGPHHNPSNNLVYKMPPANMSSEEVQQVESGTVHFTFCAGSENQLEKTRDFAETTSKELIQSKKNVKMSNSKLVPETTFSPLESQVGPALSISQLTTSPRYPAISHSSKTAMQYIPSQLLPSPMAYQLSHAELPYASSITHLEADMSESHPNNSNGEHLQELLFSPVHAPIVAMGTQTGSTTSLLSRASLARLHSVEFPEILDCNNEVAEVVDPSNPVNFNLQREEADYLLCNEIVLQFLAFTRIHDGSTIWPESIFFTFQFYRFHHVTTPRLQLLQLESSDIATADPLTHVLVQINKDGSIKKGSPGFQIKYSVDPGFLKPGERKWFLRFLALQTLQIDIWDGESLLLIGSAAVEMKHLLRQGRTAVQVSHDLEVITTEYEQDLMVMSGDTAKQGTAKPIGVHTIIKGRLHMRMGNVGRPPEKKLKRRETLPPSNSRIITMHDGRTGFHGGSMLSNKSMNWKQSVCQAHKLADLDSELAAMLCSRMKEVSIAYQQTNSETDTTERRKKERMMAVRQQESQENANLRKSLIMAQHEERTQHTRDLQIIEAYRERTKPECISSMLNQAITSNYTVYATLGTAEFFEFELKNPYNIQYTVTIEIDSTDLRVITDTREWKHFKELTSTVTPIEENMFHVQPNTVIPQLYLRAKETVYIPFKYQTFCVDHTPMLQGPDAESLRKHSQLSQYKSNAMSSRRIKVSFKTSDGKLIAILQVNIEPQPHVVDQTFRFYHPELTFLKKSIRLPPWYTLPGAPVGTPGGEPDLQVRCSDINIICDSKKMGPGEPQDVFIKVAGGPSPQIKRFFIALYIDPWLAAPIQIWQIYVHSLKRVDVSCITGQLTQLSLVLRGTQVVRKVRAYSSHPEELKVDPDGVFVLPPNGIQDLHIGVRPQKAGSQFIYLNLVDVDQHQLVASWLVCVSCRKPVISKAFEIALPVGGEKGCNKRISYRNPYPTKKTYSLYTNRSDLLQFKENYFEVAAGETYSIGLRFAPSQTRGQEEILIFINDREDKNEETFCVKVRYE.

The sufficient for basal bodies localization stretch occupies residues methionine 824–glutamate 1430. The disordered stretch occupies residues asparagine 828 to arginine 857.

It belongs to the NPHP4 family.

It localises to the cytoplasm. It is found in the cytoskeleton. The protein resides in the cilium basal body. Its function is as follows. Involved in the organization of apical junctions. Required for building functional cilia. Involved in the organization of the subapical actin network in multiciliated epithelial cells. Seems to recruit int to basal bodies of motile cilia which subsequently interacts with actin-modifying proteins such as daam1. May down-regulate the canonical Wnt pathway and promote the Wnt-PCP pathway. Acts as a negative regulator of the hippo pathway. This Xenopus laevis (African clawed frog) protein is Nephrocystin-4 (nphp4).